We begin with the raw amino-acid sequence, 536 residues long: Probable tyrosyl-DNA phosphodiesterase (536 aa).

H122 functions as the Nucleophile in the catalytic mechanism. Residue K124 coordinates substrate. Residues S315–S318 form an interaction with DNA region. H401 (proton donor/acceptor) is an active-site residue. K403 provides a ligand contact to substrate.

It belongs to the tyrosyl-DNA phosphodiesterase family.

It localises to the nucleus. Functionally, DNA repair enzyme that can remove a variety of covalent adducts from DNA through hydrolysis of a 3'-phosphodiester bond, giving rise to DNA with a free 3' phosphate. Catalyzes the hydrolysis of dead-end complexes between DNA and the topoisomerase I active site tyrosine residue. Hydrolyzes 3'-phosphoglycolates on protruding 3' ends on DNA double-strand breaks due to DNA damage by radiation and free radicals. Acts on blunt-ended double-strand DNA breaks and on single-stranded DNA. May have low 3'exonuclease activity and may be able to remove a single nucleoside from the 3'end of DNA and RNA molecules with 3'hydroxyl groups. Has no exonuclease activity towards DNA or RNA with a 3'phosphate. This is Probable tyrosyl-DNA phosphodiesterase from Schizosaccharomyces pombe (strain 972 / ATCC 24843) (Fission yeast).